The following is a 341-amino-acid chain: HTH-type transcriptional repressor CytR (341 aa).

One can recognise an HTH lacI-type domain in the interval 10–64 (ATMKDVALKAKVSTATVSRALMNPDKVSQATRNRVEKAAREVGYLPQPMGRNVKR). The H-T-H motif DNA-binding region spans 12–31 (MKDVALKAKVSTATVSRALM).

In terms of biological role, this protein negatively controls the transcription initiation of genes such as deoCABD, udp, and cdd encoding catabolizing enzymes and nupC, nupG, and tsx encoding transporting and pore-forming proteins. Binds cytidine and adenosine as effectors. The sequence is that of HTH-type transcriptional repressor CytR (cytR) from Escherichia coli (strain K12).